We begin with the raw amino-acid sequence, 502 residues long: Glutamate--tRNA ligase (502 aa).

The short motif at 12–22 (PSPTGYLHVGG) is the 'HIGH' region element. The 'KMSKS' region motif lies at 259 to 263 (KLSKR). Residue Lys-262 coordinates ATP.

This sequence belongs to the class-I aminoacyl-tRNA synthetase family. Glutamate--tRNA ligase type 1 subfamily. As to quaternary structure, monomer.

It is found in the cytoplasm. The catalysed reaction is tRNA(Glu) + L-glutamate + ATP = L-glutamyl-tRNA(Glu) + AMP + diphosphate. Its function is as follows. Catalyzes the attachment of glutamate to tRNA(Glu) in a two-step reaction: glutamate is first activated by ATP to form Glu-AMP and then transferred to the acceptor end of tRNA(Glu). The sequence is that of Glutamate--tRNA ligase from Chlorobium chlorochromatii (strain CaD3).